The following is a 511-amino-acid chain: S-layer protein B (511 aa).

Residues M1–G24 form the signal peptide. Positions I358–E392 form a coiled coil. Residues G487 to F507 form a helical membrane-spanning segment.

This sequence belongs to the Sulfolobales SlaB family. The mushroom-shaped unit cells of the Sulfolobales' S-layers may consist of three SlaB subunits and six SlaA subunits.

It is found in the secreted. The protein resides in the cell wall. Its subcellular location is the S-layer. It localises to the cell membrane. Its function is as follows. S-layer small protein. May anchor the complex to the cell membrane. The polypeptide is S-layer protein B (Acidianus ambivalens (Desulfurolobus ambivalens)).